Reading from the N-terminus, the 651-residue chain is Meiotic expression up-regulated protein 6 (651 aa).

Composition is skewed to basic and acidic residues over residues 1-12 (MSYEGREERPEQ) and 21-30 (VSEHNEHDSG). Residues 1–102 (MSYEGREERP…EKKSKKKAKD (102 aa)) are disordered. The span at 72-83 (TVDNIDPADDDP) shows a compositional bias: acidic residues. A compositionally biased stretch (basic and acidic residues) spans 90 to 102 (KVEEKKSKKKAKD). The PH domain maps to 194–261 (CRGLLFYSKS…WITDLKNAIA (68 aa)). Disordered stretches follow at residues 365-430 (TVEA…GTPI), 468-514 (VATP…KGGN), and 587-630 (TIKP…QMPQ). 2 stretches are compositionally biased toward polar residues: residues 410–429 (ESTS…NGTP) and 478–490 (PSTA…SVVS). Positions 497–514 (KKAGKKHHRHHKKKKGGN) are enriched in basic residues. Positions 587 to 604 (TIKPETPLTPTTTPTPRT) are enriched in low complexity.

This chain is Meiotic expression up-regulated protein 6 (meu6), found in Schizosaccharomyces pombe (strain 972 / ATCC 24843) (Fission yeast).